The sequence spans 328 residues: Ketol-acid reductoisomerase (NADP(+)) (328 aa).

The 181-residue stretch at 2–182 (AKIYRDVDAS…GATRAGVIET (181 aa)) folds into the KARI N-terminal Rossmann domain. NADP(+)-binding positions include 25 to 28 (YGIQ), Arg-48, Ser-53, and 83 to 86 (DMEQ). Residue His-108 is part of the active site. Gly-134 contributes to the NADP(+) binding site. A KARI C-terminal knotted domain is found at 183–328 (TFAEETETDL…IEMRRLLFGQ (146 aa)). Mg(2+) is bound by residues Asp-191, Glu-195, Glu-227, and Glu-231. Residue Ser-252 participates in substrate binding.

It belongs to the ketol-acid reductoisomerase family. Requires Mg(2+) as cofactor.

The enzyme catalyses (2R)-2,3-dihydroxy-3-methylbutanoate + NADP(+) = (2S)-2-acetolactate + NADPH + H(+). It catalyses the reaction (2R,3R)-2,3-dihydroxy-3-methylpentanoate + NADP(+) = (S)-2-ethyl-2-hydroxy-3-oxobutanoate + NADPH + H(+). The protein operates within amino-acid biosynthesis; L-isoleucine biosynthesis; L-isoleucine from 2-oxobutanoate: step 2/4. It participates in amino-acid biosynthesis; L-valine biosynthesis; L-valine from pyruvate: step 2/4. Its function is as follows. Involved in the biosynthesis of branched-chain amino acids (BCAA). Catalyzes an alkyl-migration followed by a ketol-acid reduction of (S)-2-acetolactate (S2AL) to yield (R)-2,3-dihydroxy-isovalerate. In the isomerase reaction, S2AL is rearranged via a Mg-dependent methyl migration to produce 3-hydroxy-3-methyl-2-ketobutyrate (HMKB). In the reductase reaction, this 2-ketoacid undergoes a metal-dependent reduction by NADPH to yield (R)-2,3-dihydroxy-isovalerate. In Pyrobaculum arsenaticum (strain DSM 13514 / JCM 11321 / PZ6), this protein is Ketol-acid reductoisomerase (NADP(+)).